The primary structure comprises 224 residues: Large ribosomal subunit protein uL1 (224 aa).

Belongs to the universal ribosomal protein uL1 family. In terms of assembly, part of the 50S ribosomal subunit.

Binds directly to 23S rRNA. The L1 stalk is quite mobile in the ribosome, and is involved in E site tRNA release. Functionally, protein L1 is also a translational repressor protein, it controls the translation of the L11 operon by binding to its mRNA. The chain is Large ribosomal subunit protein uL1 from Borrelia recurrentis (strain A1).